The following is a 663-amino-acid chain: MRAHRIDTFLIRENIKLEIIHESNSYFGGEHISIAFRFKHLGSQHELFNYKEKLLTVDKAVEEKLEQQAKVQDDGEGTMENQTWSLKSLLGAFKRTGEPEESVDVDNMKMLNESKMLREKIQKQMYFHQPVTLISGYVQISGVFQYDSEVISESKFKQDEVKMVGLDIVPGHTTNSVLALEDGEHFKGKRNLTNYLNSDYTNVTNGLLFSESGSRGRTGTYNERTLMISNDTSIKTLPLLLIPQTLLFSEISLEPGEVRTFYFKSTKLPKDICPSYSSSKVASINYTLEVGADVLSDDNIEKFSNRVPITIAPYISSNAEQYTSRLDKPAIILKTGNIKELKPRLFTRKVSTASAVSFGRRKSSIIDIDSPLEDNEFVKRVKKNFIELVESNQNVSRDIDELIDLQMGVQFGKDEDSSDPEPNDSHFSNEMVTSAESSLRSDAVTKRRKSYSVRDNISNLEQKMWNDCSLVKSDENSNLLPQLINLQNAYQINRNNETMAKVSLSAPFYKTTDDINLVIELDPITTPLLKVTSLTVSLESFEIINPKYKTEGKGIGSKPKGNSVYEKHFICFDECKSVSVKLLPPRSPTNQITGQFKTDVFQHKWMIGLKFVIIAKTESITLDQFYEDKKGILFHSKENLEGEEFTCYVPIPILCTSEDFMGW.

A phosphoserine mark is found at serine 351, serine 354, serine 357, serine 363, serine 364, and serine 370. The tract at residues 412 to 443 is disordered; it reads GKDEDSSDPEPNDSHFSNEMVTSAESSLRSDA. Polar residues predominate over residues 426-440; it reads HFSNEMVTSAESSLR.

It belongs to the RGP1 family. Forms a complex with RIC1.

The protein resides in the golgi apparatus. The RIC1-RGP1 complex acts as a guanine nucleotide exchange factor (GEF), which activates YPT6 by exchanging bound GDP for free GTP. It is thereby required for efficient fusion of endosome-derived vesicles with the Golgi. The RIC1-RGP1 participates in the recycling of SNC1, presumably by mediating fusion of endosomal vesicles with the Golgi compartment. Its function is as follows. Required for proper mitotic growth. The sequence is that of Guanine nucleotide exchange factor subunit RGP1 from Saccharomyces cerevisiae (strain ATCC 204508 / S288c) (Baker's yeast).